We begin with the raw amino-acid sequence, 417 residues long: uncharacterized protein (417 aa).

A run of 9 helical transmembrane segments spans residues Met-1–Ser-21, Val-32–Gly-52, Val-96–Met-116, Leu-168–Ala-188, Val-192–Ala-212, Ile-261–Phe-281, Leu-286–Thr-306, Ala-351–Gly-371, and Val-392–Leu-412.

Belongs to the concentrative nucleoside transporter (CNT) (TC 2.A.41) family.

The protein localises to the cell inner membrane. This is an uncharacterized protein from Haemophilus influenzae (strain ATCC 51907 / DSM 11121 / KW20 / Rd).